Reading from the N-terminus, the 445-residue chain is UPF0210 protein STK_02450 (445 aa).

Belongs to the UPF0210 family.

This is UPF0210 protein STK_02450 from Sulfurisphaera tokodaii (strain DSM 16993 / JCM 10545 / NBRC 100140 / 7) (Sulfolobus tokodaii).